Reading from the N-terminus, the 579-residue chain is Protein inscuteable homolog (579 aa).

Residues 74–89 (SVQRWMEDLKLMTECE) are important for interaction with GPSM2. The PDZ-binding signature appears at 576–579 (ESFV).

In terms of assembly, interacts with ALS2CR19/PAR3B and F2RL2/PAR3. Interacts with GPSM1/AGS3 and GPSM2/LGN (via TPR repeat region). Identified in a complex with GPSM2 and F2RL2. As to expression, isoform 1 is expressed in various tissues with stronger expression in liver, kidney and small intestine. Isoform 2 is abundantly expressed in small intestine and to a lower extent in lung and pancreas.

Its subcellular location is the cytoplasm. It is found in the cell cortex. Functionally, may function as an adapter linking the Par3 complex to the GPSM1/GPSM2 complex. Involved in spindle orientation during mitosis. May regulate cell proliferation and differentiation in the developing nervous system. May play a role in the asymmetric division of fibroblasts and participate in the process of stratification of the squamous epithelium. The sequence is that of Protein inscuteable homolog (INSC) from Homo sapiens (Human).